The following is a 106-amino-acid chain: Cyclin-dependent protein kinase inhibitor SMR15 (106 aa).

Functionally, probable cyclin-dependent protein kinase (CDK) inhibitor that functions as a repressor of mitosis in the endoreduplication cell cycle. The sequence is that of Cyclin-dependent protein kinase inhibitor SMR15 from Arabidopsis thaliana (Mouse-ear cress).